A 383-amino-acid polypeptide reads, in one-letter code: F-box/kelch-repeat protein At4g19330 (383 aa).

The segment at 1 to 27 (MAYLSFKSNMERTPRESNTPCPPPQPS) is disordered. Residues 28 to 79 (PSLFSSLPDDIVLNILARISTSYYQTLSLVSKTFRLLILSKELDMERSYLGT) form the F-box domain. Kelch repeat units lie at residues 147–192 (ETYE…VLDG), 193–239 (KLYV…NIQT), and 272–318 (STCE…SEIG).

Its function is as follows. Involved in seed germination. The sequence is that of F-box/kelch-repeat protein At4g19330 from Arabidopsis thaliana (Mouse-ear cress).